The primary structure comprises 105 residues: Large ribosomal subunit protein uL24 (105 aa).

Belongs to the universal ribosomal protein uL24 family. In terms of assembly, part of the 50S ribosomal subunit.

Functionally, one of two assembly initiator proteins, it binds directly to the 5'-end of the 23S rRNA, where it nucleates assembly of the 50S subunit. One of the proteins that surrounds the polypeptide exit tunnel on the outside of the subunit. The sequence is that of Large ribosomal subunit protein uL24 from Rhizorhabdus wittichii (strain DSM 6014 / CCUG 31198 / JCM 15750 / NBRC 105917 / EY 4224 / RW1) (Sphingomonas wittichii).